The primary structure comprises 162 residues: 2-amino-4-hydroxy-6-hydroxymethyldihydropteridine pyrophosphokinase (162 aa).

Belongs to the HPPK family.

It catalyses the reaction 6-hydroxymethyl-7,8-dihydropterin + ATP = (7,8-dihydropterin-6-yl)methyl diphosphate + AMP + H(+). The protein operates within cofactor biosynthesis; tetrahydrofolate biosynthesis; 2-amino-4-hydroxy-6-hydroxymethyl-7,8-dihydropteridine diphosphate from 7,8-dihydroneopterin triphosphate: step 4/4. Catalyzes the transfer of pyrophosphate from adenosine triphosphate (ATP) to 6-hydroxymethyl-7,8-dihydropterin, an enzymatic step in folate biosynthesis pathway. The sequence is that of 2-amino-4-hydroxy-6-hydroxymethyldihydropteridine pyrophosphokinase (folK) from Streptococcus pyogenes serotype M3 (strain ATCC BAA-595 / MGAS315).